A 138-amino-acid chain; its full sequence is Large ribosomal subunit protein uL16 (138 aa).

Residues 1-13 (MLQPKRRKYRKEQ) show a composition bias toward basic residues. The disordered stretch occupies residues 1 to 22 (MLQPKRRKYRKEQKGRNTGVAT).

It belongs to the universal ribosomal protein uL16 family. As to quaternary structure, part of the 50S ribosomal subunit.

In terms of biological role, binds 23S rRNA and is also seen to make contacts with the A and possibly P site tRNAs. The protein is Large ribosomal subunit protein uL16 of Paraburkholderia phymatum (strain DSM 17167 / CIP 108236 / LMG 21445 / STM815) (Burkholderia phymatum).